A 218-amino-acid polypeptide reads, in one-letter code: Histone chaperone ASF1B (218 aa).

This sequence belongs to the ASF1 family. In terms of assembly, interacts with histone H3 and histone H4. Interacts strongly with the N-terminus of TOUSLED. Post-translationally, phosphorylated in vitro by TOUSLED.

It localises to the nucleus. Functionally, histone chaperone that facilitates histone deposition and histone exchange and removal during nucleosome assembly and disassembly. The polypeptide is Histone chaperone ASF1B (ASF1B) (Arabidopsis thaliana (Mouse-ear cress)).